A 465-amino-acid chain; its full sequence is Methylenetetrahydrofolate--tRNA-(uracil-5-)-methyltransferase TrmFO (465 aa).

11–16 (GGGLAG) lines the FAD pocket.

Belongs to the MnmG family. TrmFO subfamily. FAD serves as cofactor.

Its subcellular location is the cytoplasm. The enzyme catalyses uridine(54) in tRNA + (6R)-5,10-methylene-5,6,7,8-tetrahydrofolate + NADH + H(+) = 5-methyluridine(54) in tRNA + (6S)-5,6,7,8-tetrahydrofolate + NAD(+). It catalyses the reaction uridine(54) in tRNA + (6R)-5,10-methylene-5,6,7,8-tetrahydrofolate + NADPH + H(+) = 5-methyluridine(54) in tRNA + (6S)-5,6,7,8-tetrahydrofolate + NADP(+). Functionally, catalyzes the folate-dependent formation of 5-methyl-uridine at position 54 (M-5-U54) in all tRNAs. The polypeptide is Methylenetetrahydrofolate--tRNA-(uracil-5-)-methyltransferase TrmFO (Acaryochloris marina (strain MBIC 11017)).